Reading from the N-terminus, the 210-residue chain is HTH-type transcriptional regulator TtgR (210 aa).

Positions 10–70 constitute an HTH tetR-type domain; the sequence is QETRAQIIEA…ALLDSLHETH (61 aa). Positions 33-52 form a DNA-binding region, H-T-H motif; it reads TLADIAELAGVTRGAIYWHF.

As to quaternary structure, homodimer.

Represses expression from the ttgABC operon promoter and its own expression. Binds to a promoter region between the divergently transcribed ttgR and ttgABC genes/operons; in the presence of chloramphenicol or tetracycline this binding no longer occurs and ttgR and ttgABC are derepressed. This suggests that TtgR binds these antibiotics. The sequence is that of HTH-type transcriptional regulator TtgR (ttgR) from Pseudomonas putida (strain DOT-T1E).